The sequence spans 352 residues: 4-hydroxy-2-oxovalerate aldolase 4 (352 aa).

The region spanning 9-261 (IRVTDSSLRD…RTGIDTLKII (253 aa)) is the Pyruvate carboxyltransferase domain. 17-18 (RD) provides a ligand contact to substrate. D18 is a binding site for Mn(2+). H21 functions as the Proton acceptor in the catalytic mechanism. Residues S171 and H200 each coordinate substrate. 2 residues coordinate Mn(2+): H200 and H202. Y291 is a binding site for substrate.

Belongs to the 4-hydroxy-2-oxovalerate aldolase family.

It catalyses the reaction (S)-4-hydroxy-2-oxopentanoate = acetaldehyde + pyruvate. The chain is 4-hydroxy-2-oxovalerate aldolase 4 from Rhodococcus jostii (strain RHA1).